A 131-amino-acid chain; its full sequence is Small ribosomal subunit protein bS6 (131 aa).

The disordered stretch occupies residues 98–131 (EASPMVKAKDERRERRDDFANETADDSDAGDSEE). Basic and acidic residues predominate over residues 104-116 (KAKDERRERRDDF). A compositionally biased stretch (acidic residues) spans 120-131 (TADDSDAGDSEE).

This sequence belongs to the bacterial ribosomal protein bS6 family.

Functionally, binds together with bS18 to 16S ribosomal RNA. This Enterobacter sp. (strain 638) protein is Small ribosomal subunit protein bS6.